The sequence spans 1423 residues: Protein phosphatase Slingshot homolog 2 (1423 aa).

2 disordered regions span residues 1–37 (MALVTVQRSPTPSTTSSPCASEADSGEEECRSQPRSI) and 51–70 (LPRGNGSSTPRVSHRRNKHA). The segment covering 9–18 (SPTPSTTSSP) has biased composition (low complexity). Residues Ser17, Ser25, and Ser36 each carry the phosphoserine modification. One can recognise a DEK-C domain in the interval 248 to 303 (ERTERLIKTKLREIMMQKDLENITSKEIRTELEMQMVCNLREFKEFIDNEMIVILG). One can recognise a Tyrosine-protein phosphatase domain in the interval 307 to 448 (SPTQIFEHVF…LEEYQGILLA (142 aa)). Cys392 serves as the catalytic Phosphocysteine intermediate. Residues Ser461, Ser487, Ser534, Ser631, and Ser633 each carry the phosphoserine modification. Disordered regions lie at residues 698 to 725 (EMAADDQRSSSLSNTPHASEESSVDEDQ), 833 to 858 (HSSTADLEEEEPVEGEHDWGPGMHSG), 878 to 950 (RQEQ…HCER), 967 to 991 (APQDCLGSDSRSKKQEGDLKKQRAV), 1021 to 1042 (SLGHTEPGGEATPSKEGEKQGL), 1074 to 1105 (PQVLPLPHSSSECDRPADPNPMLSSPQDKGDC), and 1207 to 1226 (PEACRIPHSSSSENIRDLSH). Residues 884 to 904 (HGTASAGPTLSNRKNSKNDSS) show a composition bias toward polar residues. Composition is skewed to basic and acidic residues over residues 910–932 (PKWKSDETTPEHSFFLKEAEPSK), 976–987 (SRSKKQEGDLKK), and 1033–1042 (PSKEGEKQGL). The residue at position 1217 (Ser1217) is a Phosphoserine. Phosphothreonine is present on Thr1422.

Belongs to the protein-tyrosine phosphatase family. Interacts with filamentous actin. As to expression, expressed in brain, heart, liver, skeletal muscle, testis and thymus. Also expressed at lower levels in kidney, small intestine and spleen. Within testicular seminiferous tubules expressed in germ cells and spermatocytes, where it has a cytoplasmic localization, and round spermatids, where it concentrates in the acrosomal region next to the nucleus.

The protein resides in the cytoplasm. It localises to the cytoskeleton. Its subcellular location is the cell junction. It is found in the focal adhesion. The protein localises to the cytoplasmic vesicle. The protein resides in the secretory vesicle. It localises to the acrosome. The enzyme catalyses O-phospho-L-tyrosyl-[protein] + H2O = L-tyrosyl-[protein] + phosphate. The catalysed reaction is O-phospho-L-seryl-[protein] + H2O = L-seryl-[protein] + phosphate. It carries out the reaction O-phospho-L-threonyl-[protein] + H2O = L-threonyl-[protein] + phosphate. Its function is as follows. Protein phosphatase which regulates actin filament dynamics. Dephosphorylates and activates the actin binding/depolymerizing factor cofilin, which subsequently binds to actin filaments and stimulates their disassembly. Inhibitory phosphorylation of cofilin is mediated by LIMK1, which may also be dephosphorylated and inactivated by this protein. Required for spermatogenesis. Involved in acrosome biogenesis, probably by regulating cofilin-mediated actin cytoskeleton remodeling during proacrosomal vesicle fusion and/or Golgi to perinuclear vesicle trafficking. This chain is Protein phosphatase Slingshot homolog 2 (Ssh2), found in Mus musculus (Mouse).